We begin with the raw amino-acid sequence, 65 residues long: Large ribosomal subunit protein bL35 (65 aa).

The protein belongs to the bacterial ribosomal protein bL35 family.

The polypeptide is Large ribosomal subunit protein bL35 (Neisseria meningitidis serogroup A / serotype 4A (strain DSM 15465 / Z2491)).